The primary structure comprises 137 residues: Glycine cleavage system H protein (137 aa).

Residues 36 to 118 (PAIIGITEYA…YGEGWLLKVE (83 aa)) enclose the Lipoyl-binding domain. N6-lipoyllysine is present on Lys-77.

This sequence belongs to the GcvH family. The glycine cleavage system is composed of four proteins: P, T, L and H. It depends on (R)-lipoate as a cofactor.

The glycine cleavage system catalyzes the degradation of glycine. The H protein shuttles the methylamine group of glycine from the P protein to the T protein. The chain is Glycine cleavage system H protein from Bifidobacterium longum (strain NCC 2705).